A 253-amino-acid chain; its full sequence is Imidazole glycerol phosphate synthase subunit HisF (253 aa).

Active-site residues include Asp-11 and Asp-130.

The protein belongs to the HisA/HisF family. Heterodimer of HisH and HisF.

The protein localises to the cytoplasm. It carries out the reaction 5-[(5-phospho-1-deoxy-D-ribulos-1-ylimino)methylamino]-1-(5-phospho-beta-D-ribosyl)imidazole-4-carboxamide + L-glutamine = D-erythro-1-(imidazol-4-yl)glycerol 3-phosphate + 5-amino-1-(5-phospho-beta-D-ribosyl)imidazole-4-carboxamide + L-glutamate + H(+). It participates in amino-acid biosynthesis; L-histidine biosynthesis; L-histidine from 5-phospho-alpha-D-ribose 1-diphosphate: step 5/9. In terms of biological role, IGPS catalyzes the conversion of PRFAR and glutamine to IGP, AICAR and glutamate. The HisF subunit catalyzes the cyclization activity that produces IGP and AICAR from PRFAR using the ammonia provided by the HisH subunit. In Caldanaerobacter subterraneus subsp. tengcongensis (strain DSM 15242 / JCM 11007 / NBRC 100824 / MB4) (Thermoanaerobacter tengcongensis), this protein is Imidazole glycerol phosphate synthase subunit HisF.